The primary structure comprises 378 residues: 3-dehydroquinate synthase (378 aa).

Residues 115-119 (GVVGD), 139-140 (TS), K152, and K161 contribute to the NAD(+) site. 3 residues coordinate Zn(2+): E194, H256, and H275.

It belongs to the sugar phosphate cyclases superfamily. Dehydroquinate synthase family. It depends on Co(2+) as a cofactor. The cofactor is Zn(2+). Requires NAD(+) as cofactor.

Its subcellular location is the cytoplasm. The catalysed reaction is 7-phospho-2-dehydro-3-deoxy-D-arabino-heptonate = 3-dehydroquinate + phosphate. Its pathway is metabolic intermediate biosynthesis; chorismate biosynthesis; chorismate from D-erythrose 4-phosphate and phosphoenolpyruvate: step 2/7. Its function is as follows. Catalyzes the conversion of 3-deoxy-D-arabino-heptulosonate 7-phosphate (DAHP) to dehydroquinate (DHQ). The chain is 3-dehydroquinate synthase from Brucella anthropi (strain ATCC 49188 / DSM 6882 / CCUG 24695 / JCM 21032 / LMG 3331 / NBRC 15819 / NCTC 12168 / Alc 37) (Ochrobactrum anthropi).